The primary structure comprises 264 residues: MKEYLDLLNLILKNGYPKIDRTKTGTLSMFGYQIRINLNEGFPLLTTKYCHFKSIVYELLWFLRGDTNISFLKKNNISIWNKWADKNGNLGPIYGKQWRAWEDKKNNTIDQIEIALNKLKKEPSSRRILVSSWNVGELDLMSIPPCHVLFQLYVINNKLSCQVYQRSCDIFLGLPFNIGSYALLTHIFANQCDLLVEDLIWTGGDIHLYKNHLNQAKLQLTRSPLPLPKIFIKKKPKNLFNYAFNDFLLIDYNHHPKIKAPISI.

Arg-21 provides a ligand contact to dUMP. His-51 lines the (6R)-5,10-methylene-5,6,7,8-tetrahydrofolate pocket. DUMP is bound at residue 126–127 (RR). Residue Cys-146 is the Nucleophile of the active site. Residues 166 to 169 (RSCD), Asn-177, and 207 to 209 (HLY) each bind dUMP. (6R)-5,10-methylene-5,6,7,8-tetrahydrofolate is bound at residue Asp-169. Ser-263 is a (6R)-5,10-methylene-5,6,7,8-tetrahydrofolate binding site.

Belongs to the thymidylate synthase family. Bacterial-type ThyA subfamily. In terms of assembly, homodimer.

Its subcellular location is the cytoplasm. The catalysed reaction is dUMP + (6R)-5,10-methylene-5,6,7,8-tetrahydrofolate = 7,8-dihydrofolate + dTMP. It participates in pyrimidine metabolism; dTTP biosynthesis. Its function is as follows. Catalyzes the reductive methylation of 2'-deoxyuridine-5'-monophosphate (dUMP) to 2'-deoxythymidine-5'-monophosphate (dTMP) while utilizing 5,10-methylenetetrahydrofolate (mTHF) as the methyl donor and reductant in the reaction, yielding dihydrofolate (DHF) as a by-product. This enzymatic reaction provides an intracellular de novo source of dTMP, an essential precursor for DNA biosynthesis. This Wigglesworthia glossinidia brevipalpis protein is Thymidylate synthase.